A 306-amino-acid polypeptide reads, in one-letter code: Isoaspartyl peptidase/L-asparaginase (306 aa).

Catalysis depends on threonine 174, which acts as the Nucleophile. Substrate is bound by residues 202–205 and 224–227; these read RIGD and TGKG.

This sequence belongs to the Ntn-hydrolase family. Heterotetramer of two alpha and two beta chains arranged as a dimer of alpha/beta heterodimers. Post-translationally, cleaved into an alpha and beta chain by autocatalysis; this activates the enzyme. The N-terminal residue of the beta subunit is responsible for the nucleophile hydrolase activity. In terms of tissue distribution, developing seeds.

The catalysed reaction is Cleavage of a beta-linked Asp residue from the N-terminus of a polypeptide.. Its function is as follows. Degrades proteins damaged by L-isoaspartyl residue formation (also known as beta-Asp residues). Also has L-asparaginase activity, which is used to liberate stored nitrogen during seed development. This Lupinus arboreus (Tree lupine) protein is Isoaspartyl peptidase/L-asparaginase.